A 373-amino-acid chain; its full sequence is C-C chemokine receptor type 2 (373 aa).

Over 1-60 the chain is Extracellular; that stretch reads MEDSNMLPQFIHGILSTSHSLFPRSIQELDEGATTPYDYDDGEPCHKTSVKQIGAWILPP. Residues 61–81 traverse the membrane as a helical segment; sequence LYSLVFIFGFVGNMLVIIILI. The Cytoplasmic segment spans residues 82-91; that stretch reads SCKKLKSMTD. A helical transmembrane segment spans residues 92–112; that stretch reads IYLFNLAISDLLFLLTLPFWA. Topologically, residues 113-128 are extracellular; that stretch reads HYAANEWVFGNIMCKL. Cysteine 126 and cysteine 203 are oxidised to a cystine. Residues 129-149 form a helical membrane-spanning segment; sequence FTGLYHIGYFGGIFFIILLTI. Topologically, residues 150-170 are cytoplasmic; sequence DRYLAIVHAVFALKARTVTFG. Tyrosine 152 carries the phosphotyrosine; by JAK2 modification. Residues 171–191 form a helical membrane-spanning segment; sequence VITSVVTWVVAVFASLPGIIF. Residues 192 to 220 are Extracellular-facing; sequence TKSEQEDDQHTCGPYFPTIWKNFQTIMRN. Residues 221–241 form a helical membrane-spanning segment; that stretch reads ILSLILPLLVMVICYSGILHT. The Cytoplasmic portion of the chain corresponds to 242–256; that stretch reads LFRCRNEKKRHRAVR. A helical membrane pass occupies residues 257 to 277; that stretch reads LIFAIMIVYFLFWTPYNIVLF. At 278–301 the chain is on the extracellular side; it reads LTTFQEFLGMSNCVVDMHLDQAMQ. A helical transmembrane segment spans residues 302–322; the sequence is VTETLGMTHCCVNPIIYAFVG. Residues 323–373 are Cytoplasmic-facing; it reads EKFRRYLSIFFRKHIAKNLCKQCPVFYRETADRVSSTFTPSTGEQEVSVGL.

It belongs to the G-protein coupled receptor 1 family. In terms of assembly, interacts with ARRB1. Interacts (via extracellular N-terminal region) with beta-defensin DEFB106A/DEFB106B; this interaction may preferentially require specific tyrosine sulfation on CCR2. Interacts with NUP85; the interaction is required for CCR2 clusters formation on the cell membrane and CCR2 signaling. N-glycosylated. In terms of processing, sulfation increases the affinity for both monomeric and dimeric CCL2 with stronger binding to the monomeric form. Binding of sulfated CCR2 to CCL2 promotes conversion of CCL2 from dimer to monomer. As to expression, expressed in lung, spleen, kidney, thymus and macrophages.

Its subcellular location is the cell membrane. In terms of biological role, key functional receptor for CCL2 but can also bind CCL7 and CCL12. Its binding with CCL2 on monocytes and macrophages mediates chemotaxis and migration induction through the activation of the PI3K cascade, the small G protein Rac and lamellipodium protrusion. Also acts as a receptor for the beta-defensin DEFB106A/DEFB106B. Regulates the expression of T-cell inflammatory cytokines and T-cell differentiation, promoting the differentiation of T-cells into T-helper 17 cells (Th17) during inflammation. Facilitates the export of mature thymocytes by enhancing directional movement of thymocytes to sphingosine-1-phosphate stimulation and up-regulation of S1P1R expression; signals through the JAK-STAT pathway to regulate FOXO1 activity leading to an increased expression of S1P1R. Plays an important role in mediating peripheral nerve injury-induced neuropathic pain. Increases NMDA-mediated synaptic transmission in both dopamine D1 and D2 receptor-containing neurons, which may be caused by MAPK/ERK-dependent phosphorylation of GRIN2B/NMDAR2B. Mediates the recruitment of macrophages and monocytes to the injury site following brain injury. The sequence is that of C-C chemokine receptor type 2 (Ccr2) from Rattus norvegicus (Rat).